We begin with the raw amino-acid sequence, 129 residues long: Intraflagellar transport protein 20 homolog (129 aa).

The stretch at 89 to 121 forms a coiled coil; the sequence is VLLQMTIRELTVEKERLRVELEAVRKIEKEQDE.

Component of the IFT complex B composed of at least che-2, che-13, dyf-1, dyf-3, dyf-6, dyf-11, dyf-13, ift-20, ift-74, ift-81, ifta-2, osm-1, osm-5 and osm-6.

It is found in the cell projection. Its subcellular location is the cilium. Component of the intraflagellar transport (IFT) complex B required for transport of proteins in the motile cilium. Required for ciliary entrance and transport of specific ciliary cargo proteins such as che-3 which are related to motility. The polypeptide is Intraflagellar transport protein 20 homolog (Caenorhabditis elegans).